We begin with the raw amino-acid sequence, 474 residues long: Cell division protein FtsP (474 aa).

A signal peptide (tat-type signal) is located at residues 1-27 (MSLSRRQFIQAAGLALGAGSLPLRAQA). The Plastocyanin-like domain occupies 229–288 (WVRLRLLNASNARRYTLQLSDGRPLYVVASDQGFLPAPVAVQQLSLAPGERREVVIDMSQ).

The protein belongs to the FtsP family. In terms of processing, predicted to be exported by the Tat system. The position of the signal peptide cleavage has not been experimentally proven.

It is found in the periplasm. Cell division protein that is required for growth during stress conditions. May be involved in protecting or stabilizing the divisomal assembly under conditions of stress. The polypeptide is Cell division protein FtsP (Yersinia pestis).